Here is a 130-residue protein sequence, read N- to C-terminus: Large ribosomal subunit protein bL17 (130 aa).

It belongs to the bacterial ribosomal protein bL17 family. In terms of assembly, part of the 50S ribosomal subunit. Contacts protein L32.

The sequence is that of Large ribosomal subunit protein bL17 from Shewanella halifaxensis (strain HAW-EB4).